A 130-amino-acid polypeptide reads, in one-letter code: Encapsulin nanocompartment cargo protein EncC (130 aa).

Glu-31, Glu-61, and His-64 together coordinate Fe cation. The Di-iron-binding motif motif lies at 61 to 64 (EREH). Positions 103–130 (EAVGKEGAAPSPADVTPEKRLTVGSLRR) are disordered. The probable targeting peptide stretch occupies residues 123–130 (LTVGSLRR).

Belongs to the ferritin-like superfamily.

Its subcellular location is the encapsulin nanocompartment. Cargo protein of a type 1 encapsulin nanocompartment. May help nucleate Fe atoms in the interior of the encapsulin nanocompartment. Present in about 92 copies/encapsulin nanocompartment. The sequence is that of Encapsulin nanocompartment cargo protein EncC from Myxococcus xanthus (strain DK1622).